The chain runs to 362 residues: Chorismate synthase (362 aa).

Arg46 lines the NADP(+) pocket. FMN contacts are provided by residues 122–124 (RSS), 238–239 (NA), Gly278, 293–297 (KPTPS), and Arg319.

The protein belongs to the chorismate synthase family. As to quaternary structure, homotetramer. FMNH2 is required as a cofactor.

It catalyses the reaction 5-O-(1-carboxyvinyl)-3-phosphoshikimate = chorismate + phosphate. The protein operates within metabolic intermediate biosynthesis; chorismate biosynthesis; chorismate from D-erythrose 4-phosphate and phosphoenolpyruvate: step 7/7. In terms of biological role, catalyzes the anti-1,4-elimination of the C-3 phosphate and the C-6 proR hydrogen from 5-enolpyruvylshikimate-3-phosphate (EPSP) to yield chorismate, which is the branch point compound that serves as the starting substrate for the three terminal pathways of aromatic amino acid biosynthesis. This reaction introduces a second double bond into the aromatic ring system. In Campylobacter jejuni subsp. jejuni serotype O:6 (strain 81116 / NCTC 11828), this protein is Chorismate synthase.